The chain runs to 364 residues: Tyrosine--tRNA ligase (364 aa).

Residue tyrosine 39 coordinates L-tyrosine. ATP-binding residues include histidine 49 and tryptophan 52. The L-tyrosine site is built by tyrosine 165, glutamine 169, aspartate 172, and glutamine 187. A 'KMSKS' region motif is present at residues 238 to 242; it reads KMSKS. An ATP-binding site is contributed by lysine 241.

This sequence belongs to the class-I aminoacyl-tRNA synthetase family. TyrS type 4 subfamily. In terms of assembly, homodimer.

It is found in the cytoplasm. The enzyme catalyses tRNA(Tyr) + L-tyrosine + ATP = L-tyrosyl-tRNA(Tyr) + AMP + diphosphate + H(+). In terms of biological role, catalyzes the attachment of tyrosine to tRNA(Tyr) in a two-step reaction: tyrosine is first activated by ATP to form Tyr-AMP and then transferred to the acceptor end of tRNA(Tyr). The protein is Tyrosine--tRNA ligase of Aeropyrum pernix (strain ATCC 700893 / DSM 11879 / JCM 9820 / NBRC 100138 / K1).